Here is a 561-residue protein sequence, read N- to C-terminus: Long-chain-fatty-acid--CoA ligase (561 aa).

Residue 213–224 (YTGGTTGVAKGA) coordinates ATP.

Belongs to the ATP-dependent AMP-binding enzyme family. The cofactor is Mg(2+).

Its subcellular location is the membrane. It catalyses the reaction a long-chain fatty acid + ATP + CoA = a long-chain fatty acyl-CoA + AMP + diphosphate. It participates in lipid metabolism; fatty acid beta-oxidation. Its function is as follows. Catalyzes the esterification, concomitant with transport, of exogenous long-chain fatty acids into metabolically active CoA thioesters for subsequent degradation or incorporation into phospholipids. This is Long-chain-fatty-acid--CoA ligase (fadD) from Escherichia coli O157:H7.